Consider the following 703-residue polypeptide: Elongation factor G (703 aa).

One can recognise a tr-type G domain in the interval 9–292; sequence ERTRNIGIMA…AVVDYLPGPL (284 aa). GTP contacts are provided by residues 18-25, 91-95, and 145-148; these read AHIDAGKT, DTPGH, and NKMD.

This sequence belongs to the TRAFAC class translation factor GTPase superfamily. Classic translation factor GTPase family. EF-G/EF-2 subfamily.

It is found in the cytoplasm. In terms of biological role, catalyzes the GTP-dependent ribosomal translocation step during translation elongation. During this step, the ribosome changes from the pre-translocational (PRE) to the post-translocational (POST) state as the newly formed A-site-bound peptidyl-tRNA and P-site-bound deacylated tRNA move to the P and E sites, respectively. Catalyzes the coordinated movement of the two tRNA molecules, the mRNA and conformational changes in the ribosome. The polypeptide is Elongation factor G (Leuconostoc citreum (strain KM20)).